Here is a 246-residue protein sequence, read N- to C-terminus: Neurotrophic factor BDNF precursor form (246 aa).

Positions 1 to 18 (MTILFLTMVISYLSCMKA) are cleaved as a signal peptide. A propeptide spanning residues 19–127 (TPMKEVSIRG…AANMSMRVRR (109 aa)) is cleaved from the precursor. Residue Asn-120 is glycosylated (N-linked (GlcNAc...) asparagine). 3 disulfides stabilise this stretch: Cys-140–Cys-207, Cys-185–Cys-236, and Cys-195–Cys-238.

It belongs to the NGF-beta family.

It localises to the secreted. In terms of biological role, promotes the survival of neuronal populations that are all located either in the central nervous system or directly connected to it. This Ptyas major (Chinese green snake) protein is Neurotrophic factor BDNF precursor form (BDNF).